The sequence spans 472 residues: Serine incorporator 3 (472 aa).

Residues 1–95 (MGAVLGVFSL…KECDVLVRYK (95 aa)) are Extracellular-facing. N34 carries N-linked (GlcNAc...) asparagine glycosylation. Residues 96-116 (AVYRISFALAVFFFAFSLLML) traverse the membrane as a helical segment. Residues 117 to 131 (NVKTSKDPRAAIHNG) are Cytoplasmic-facing. The helical transmembrane segment at 132–152 (FWFFKIAAIVGVMVGSFYIPG) threads the bilayer. The Extracellular portion of the chain corresponds to 153–158 (GHFNTA). Residues 159–179 (WFVIGMVGAAFFILIQLVLLV) traverse the membrane as a helical segment. The Cytoplasmic segment spans residues 180 to 202 (DFAHSWNESWVNRMEEGNPKCWY). A helical membrane pass occupies residues 203 to 223 (AALLSVTSLFYILSIIFAGLL). Topologically, residues 224-238 (YTYYTKPDGCTENKF) are extracellular. The helical transmembrane segment at 239–259 (FISFNLILCVVISVLSIHPKI) threads the bilayer. Over 260–328 (QEHQPRSGLL…APTPAVPLQS (69 aa)) the chain is Cytoplasmic. Residues 329–349 (GPSLNKENFIGLLVFVLSLSY) traverse the membrane as a helical segment. The Extracellular portion of the chain corresponds to 350 to 405 (SSIRNSSNSQVSKLTLSGSDSVILRDTAANGASDEEDGRPRRAVDNEREGVQYNYS). The N-linked (GlcNAc...) asparagine glycan is linked to N354. S370 carries the phosphoserine modification. Residue N403 is glycosylated (N-linked (GlcNAc...) asparagine). A helical transmembrane segment spans residues 406–426 (MFHLMLCSASLYIMMTLTNWY). Over 427–445 (SPDANFQSMTSKWPAVWVK) the chain is Cytoplasmic. A helical transmembrane segment spans residues 446 to 466 (ISSSWVCLLLYVWTLVAPLVL). Residues 467–472 (TNRDFS) are Extracellular-facing.

The protein belongs to the TDE1 family. In terms of processing, N-glycosylated.

It is found in the cell membrane. The protein localises to the golgi apparatus membrane. It catalyses the reaction a 1,2-diacyl-sn-glycero-3-phospho-L-serine(in) = a 1,2-diacyl-sn-glycero-3-phospho-L-serine(out). It carries out the reaction a 1,2-diacyl-sn-glycero-3-phosphocholine(in) = a 1,2-diacyl-sn-glycero-3-phosphocholine(out). The catalysed reaction is a 1,2-diacyl-sn-glycero-3-phosphoethanolamine(in) = a 1,2-diacyl-sn-glycero-3-phosphoethanolamine(out). Restriction factor required to restrict infectivity of gammaretroviruses: acts by inhibiting an early step of viral infection. Impairs the penetration of the viral particle into the cytoplasm. Non-ATP-dependent, non-specific lipid transporter for phosphatidylserine, phosphatidylcholine, and phosphatidylethanolamine. Functions as a scramblase that flips lipids in both directions across the membrane. Phospholipid scrambling results in gammaretroviral surface exposure of phosphatidylserine and loss of membrane asymmetry, which leads to loss of infectivity. The chain is Serine incorporator 3 (SERINC3) from Bos taurus (Bovine).